Reading from the N-terminus, the 318-residue chain is Protoheme IX farnesyltransferase (318 aa).

The next 9 helical transmembrane spans lie at 37 to 57 (VMEL…RGLP), 59 to 79 (IWLI…AGAF), 108 to 128 (EALV…WFGA), 131 to 151 (LAGL…TLIL), 158 to 178 (NIVW…AAVT), 183 to 203 (WPAI…YWPL), 216 to 238 (VPML…YTWA), 249 to 269 (LGHA…WFLL), and 296 to 316 (ISYL…GMPL).

It belongs to the UbiA prenyltransferase family. Protoheme IX farnesyltransferase subfamily.

The protein localises to the cell membrane. The catalysed reaction is heme b + (2E,6E)-farnesyl diphosphate + H2O = Fe(II)-heme o + diphosphate. It functions in the pathway porphyrin-containing compound metabolism; heme O biosynthesis; heme O from protoheme: step 1/1. Functionally, converts heme B (protoheme IX) to heme O by substitution of the vinyl group on carbon 2 of heme B porphyrin ring with a hydroxyethyl farnesyl side group. This Renibacterium salmoninarum (strain ATCC 33209 / DSM 20767 / JCM 11484 / NBRC 15589 / NCIMB 2235) protein is Protoheme IX farnesyltransferase.